Reading from the N-terminus, the 147-residue chain is uncharacterized protein (147 aa).

The region spanning 44 to 147 (LVGYIDKEIH…LKSIKERLSI (104 aa)) is the HTH LytTR-type domain.

The protein resides in the cytoplasm. This is an uncharacterized protein from Staphylococcus aureus (strain MW2).